An 82-amino-acid chain; its full sequence is Turripeptide IX-04 (82 aa).

An N-terminal signal peptide occupies residues 1–21 (MGFYMLLTVALLLTSLMNVEA). The propeptide occupies 22-39 (TPVDQAERSALEKSGLGN). 3 cysteine pairs are disulfide-bonded: Cys-48-Cys-70, Cys-55-Cys-74, and Cys-60-Cys-81.

In terms of tissue distribution, expressed by the venom duct.

The protein localises to the secreted. The polypeptide is Turripeptide IX-04 (Gemmula speciosa (Splendid gem-turris)).